The sequence spans 120 residues: Immunoglobulin kappa variable 2D-29 (120 aa).

The N-terminal stretch at Met-1–Ala-20 is a signal peptide. Residues Asp-21–Cys-43 are framework-1. The region spanning Asp-21–Pro-120 is the Ig-like domain. An intrachain disulfide couples Cys-43 to Cys-113. The segment at Lys-44–Tyr-59 is complementarity-determining-1. Positions Trp-60–Tyr-74 are framework-2. The tract at residues Glu-75–Ser-81 is complementarity-determining-2. The segment at Gly-82–Cys-113 is framework-3. The segment at Met-114 to Pro-120 is complementarity-determining-3.

As to quaternary structure, immunoglobulins are composed of two identical heavy chains and two identical light chains; disulfide-linked.

Its subcellular location is the secreted. The protein localises to the cell membrane. V region of the variable domain of immunoglobulin light chains that participates in the antigen recognition. Immunoglobulins, also known as antibodies, are membrane-bound or secreted glycoproteins produced by B lymphocytes. In the recognition phase of humoral immunity, the membrane-bound immunoglobulins serve as receptors which, upon binding of a specific antigen, trigger the clonal expansion and differentiation of B lymphocytes into immunoglobulins-secreting plasma cells. Secreted immunoglobulins mediate the effector phase of humoral immunity, which results in the elimination of bound antigens. The antigen binding site is formed by the variable domain of one heavy chain, together with that of its associated light chain. Thus, each immunoglobulin has two antigen binding sites with remarkable affinity for a particular antigen. The variable domains are assembled by a process called V-(D)-J rearrangement and can then be subjected to somatic hypermutations which, after exposure to antigen and selection, allow affinity maturation for a particular antigen. The chain is Immunoglobulin kappa variable 2D-29 from Homo sapiens (Human).